Here is a 1380-residue protein sequence, read N- to C-terminus: DNA-directed RNA polymerase subunit beta (1380 aa).

The protein belongs to the RNA polymerase beta chain family. The RNAP catalytic core consists of 2 alpha, 1 beta, 1 beta' and 1 omega subunit. When a sigma factor is associated with the core the holoenzyme is formed, which can initiate transcription.

The catalysed reaction is RNA(n) + a ribonucleoside 5'-triphosphate = RNA(n+1) + diphosphate. Its function is as follows. DNA-dependent RNA polymerase catalyzes the transcription of DNA into RNA using the four ribonucleoside triphosphates as substrates. The chain is DNA-directed RNA polymerase subunit beta from Ehrlichia chaffeensis (strain ATCC CRL-10679 / Arkansas).